The primary structure comprises 306 residues: N-acetylmuramic acid/N-acetylglucosamine kinase (306 aa).

Ser-12 is an ATP binding site. Asn-35 serves as a coordination point for substrate. ATP is bound at residue Thr-124. Substrate contacts are provided by residues 142-144 (GWG) and Asp-149. Ala-208 is an ATP binding site.

Belongs to the eukaryotic-type N-acetylglucosamine kinase family. Requires Mg(2+) as cofactor.

The protein localises to the cytoplasm. It carries out the reaction N-acetyl-D-glucosamine + ATP = N-acetyl-D-glucosamine 6-phosphate + ADP + H(+). It catalyses the reaction N-acetyl-D-muramate + ATP = N-acetyl-D-muramate 6-phosphate + ADP + H(+). It functions in the pathway cell wall biogenesis; peptidoglycan recycling. Its function is as follows. Catalyzes the ATP-dependent phosphorylation of both cell wall (peptidoglycan) amino sugars, N-acetylmuramic acid (MurNAc) and N-acetylglucosamine (GlcNAc), at the 6-hydroxyl group. Neither the non-N-acetylated forms of the cell wall sugars, i.e., glucosamine and/or muramic acid, nor epimeric hexoses or 1,6-anhydro-MurNAc are substrates for the enzyme. May have a role in the rescue of the murein sugars GlcNAc and MurNAc released from muropeptides during cell wall turnover in C.acetobutylicum. In Clostridium acetobutylicum (strain ATCC 824 / DSM 792 / JCM 1419 / IAM 19013 / LMG 5710 / NBRC 13948 / NRRL B-527 / VKM B-1787 / 2291 / W), this protein is N-acetylmuramic acid/N-acetylglucosamine kinase.